We begin with the raw amino-acid sequence, 264 residues long: Protein-lysine methyltransferase METTL21C (264 aa).

Residues 1–10 (MDVCLSSAQQ) are compositionally biased toward polar residues. Residues 1 to 46 (MDVCLSSAQQPGRRGEGLSSPGGWLEAEKKGAPQKDSTGGVLEESN) form a disordered region. S-adenosyl-L-methionine is bound by residues tryptophan 92, 120–122 (GAG), aspartate 141, tryptophan 172, and serine 193.

It belongs to the methyltransferase superfamily. METTL21 family. As to quaternary structure, interacts with members of the heat shock protein 70 families; these proteins may possibly be methylation substrates for the enzyme.

It localises to the nucleus. The protein resides in the cytoplasm. The enzyme catalyses L-lysyl-[protein] + S-adenosyl-L-methionine = N(6)-methyl-L-lysyl-[protein] + S-adenosyl-L-homocysteine + H(+). It catalyses the reaction N(6)-methyl-L-lysyl-[protein] + S-adenosyl-L-methionine = N(6),N(6)-dimethyl-L-lysyl-[protein] + S-adenosyl-L-homocysteine + H(+). The catalysed reaction is N(6),N(6)-dimethyl-L-lysyl-[protein] + S-adenosyl-L-methionine = N(6),N(6),N(6)-trimethyl-L-lysyl-[protein] + S-adenosyl-L-homocysteine + H(+). Its function is as follows. Protein-lysine N-methyltransferase using S-adenosyl-L-methionine as methyl donor. Mono-di and trimethylates 'Lys-943' of AARS1. The chain is Protein-lysine methyltransferase METTL21C from Homo sapiens (Human).